We begin with the raw amino-acid sequence, 57 residues long: COP9 signalosome complex subunit 9 (57 aa).

The protein belongs to the CSN9 family. Component of the CSN complex, probably composed of cops1, cops2, cops3, cops4, cops5, cops6, cops7, cops8 and cops9.

The protein localises to the nucleus. The protein resides in the cytoplasm. It localises to the nucleoplasm. In terms of biological role, component of the COP9 signalosome complex (CSN), a complex involved in various cellular and developmental processes. The CSN complex is an essential regulator of the ubiquitin (Ubl) conjugation pathway by mediating the deneddylation of the cullin subunits of SCF-type E3 ligase complexes, leading to decrease the Ubl ligase activity. May play a role in cell proliferation. This chain is COP9 signalosome complex subunit 9, found in Danio rerio (Zebrafish).